A 196-amino-acid polypeptide reads, in one-letter code: Peptidoglycan recognition protein (196 aa).

Residues Met1–Ala23 form the signal peptide. 2 disulfides stabilise this stretch: Cys25/Cys147 and Cys61/Cys67. Residues Arg46–Gly173 enclose the N-acetylmuramoyl-L-alanine amidase domain.

This sequence belongs to the N-acetylmuramoyl-L-alanine amidase 2 family. Monomer. In terms of tissue distribution, constitutively expressed in fat body, epithelial cells and hemocytes. Not detected in Malpighian tubules, silk gland or midgut.

In terms of biological role, binds specifically to peptidoglycan and triggers the propenoloxidase cascade which is an important insect defense mechanism. The sequence is that of Peptidoglycan recognition protein from Bombyx mori (Silk moth).